A 245-amino-acid polypeptide reads, in one-letter code: Transcription factor FUP7 (245 aa).

A DNA-binding region (zn(2)-C6 fungal-type) is located at residues 10–37 (CKTCRSRKQKCDGIRPACSRCRSLGLQC). Residues 162–216 (ESSSGNADYQHEDEVQSPAGAGDDMAVGDPYRDDSVDQDSIGQPPQRTESVGNMQ) form a disordered region. Residues 199 to 214 (QDSIGQPPQRTESVGN) show a composition bias toward polar residues.

The protein resides in the nucleus. Transcription factor; part of the gene cluster that mediates the biosynthesis of the mycotoxin fusaproliferin (FUP) that belongs to the class of bicyclic sesterterpenoids. This Fusarium proliferatum (strain ET1) (Orchid endophyte fungus) protein is Transcription factor FUP7.